A 468-amino-acid chain; its full sequence is 6-phosphogluconate dehydrogenase, decarboxylating (468 aa).

NADP(+)-binding positions include 10–15, 33–35, 74–76, and asparagine 102; these read GMAVMG, NRT, and VQS. Residues asparagine 102 and 128 to 130 contribute to the substrate site; that span reads SGG. Catalysis depends on lysine 182, which acts as the Proton acceptor. 185-186 contributes to the substrate binding site; the sequence is HN. Catalysis depends on glutamate 189, which acts as the Proton donor. Residues tyrosine 190, lysine 259, arginine 286, arginine 445, and histidine 451 each contribute to the substrate site.

The protein belongs to the 6-phosphogluconate dehydrogenase family. As to quaternary structure, homodimer.

The enzyme catalyses 6-phospho-D-gluconate + NADP(+) = D-ribulose 5-phosphate + CO2 + NADPH. It participates in carbohydrate degradation; pentose phosphate pathway; D-ribulose 5-phosphate from D-glucose 6-phosphate (oxidative stage): step 3/3. Catalyzes the oxidative decarboxylation of 6-phosphogluconate to ribulose 5-phosphate and CO(2), with concomitant reduction of NADP to NADPH. The sequence is that of 6-phosphogluconate dehydrogenase, decarboxylating (gnd) from Buchnera aphidicola subsp. Acyrthosiphon pisum (strain APS) (Acyrthosiphon pisum symbiotic bacterium).